A 313-amino-acid polypeptide reads, in one-letter code: Ribosomal RNA small subunit methyltransferase H (313 aa).

S-adenosyl-L-methionine is bound by residues glycine 35–histidine 37, aspartate 55, phenylalanine 80, aspartate 102, and glutamine 109.

This sequence belongs to the methyltransferase superfamily. RsmH family.

It is found in the cytoplasm. The enzyme catalyses cytidine(1402) in 16S rRNA + S-adenosyl-L-methionine = N(4)-methylcytidine(1402) in 16S rRNA + S-adenosyl-L-homocysteine + H(+). In terms of biological role, specifically methylates the N4 position of cytidine in position 1402 (C1402) of 16S rRNA. The sequence is that of Ribosomal RNA small subunit methyltransferase H from Shewanella woodyi (strain ATCC 51908 / MS32).